The following is a 203-amino-acid chain: uncharacterized protein (203 aa).

In terms of domain architecture, PilZ spans 90 to 188 (EKRQHVRVQP…YENIIGRYVM (99 aa)).

To A.aeolicus aq_820 and aq_1583.

This is an uncharacterized protein from Aquifex aeolicus (strain VF5).